Here is a 193-residue protein sequence, read N- to C-terminus: Acyl carrier protein phosphodiesterase (193 aa).

The protein belongs to the AcpH family.

The enzyme catalyses holo-[ACP] + H2O = apo-[ACP] + (R)-4'-phosphopantetheine + H(+). In terms of biological role, converts holo-ACP to apo-ACP by hydrolytic cleavage of the phosphopantetheine prosthetic group from ACP. This chain is Acyl carrier protein phosphodiesterase, found in Serratia proteamaculans (strain 568).